A 659-amino-acid polypeptide reads, in one-letter code: Heparin-sulfate lyase (659 aa).

Residues Met-1–Ala-24 form the signal peptide. The active-site Proton acceptor is Tyr-294.

Belongs to the polysaccharide lyase 12 family.

It localises to the periplasm. The enzyme catalyses Elimination of sulfate, appears to act on linkages between N-acetyl-D-glucosamine and uronate. Product is an unsaturated sugar.. Functionally, specifically cleaves heparan sulfate-rich regions of acidic polysaccharides. Does not act on N,O-desulfated glucosamine or N-acetyl-O-sulfated glucosamine linkages. Functions in cleaving metazoan heparan sulfate and providing carbon, nitrogen and sulfate sources for microorganisms. This Pedobacter heparinus (strain ATCC 13125 / DSM 2366 / CIP 104194 / JCM 7457 / NBRC 12017 / NCIMB 9290 / NRRL B-14731 / HIM 762-3) protein is Heparin-sulfate lyase (hepC).